Here is a 396-residue protein sequence, read N- to C-terminus: Elongation factor Tu (396 aa).

A tr-type G domain is found at 10-206 (KPHVNIGTIG…AVDESVPDPV (197 aa)). A G1 region spans residues 19–26 (GHVDHGKT). 19 to 26 (GHVDHGKT) contacts GTP. Thr-26 is a binding site for Mg(2+). Residues 62–66 (GITIN) form a G2 region. The interval 83–86 (DAPG) is G3. GTP contacts are provided by residues 83-87 (DAPGH) and 138-141 (NKSD). The segment at 138 to 141 (NKSD) is G4. The interval 176–178 (SGL) is G5.

Belongs to the TRAFAC class translation factor GTPase superfamily. Classic translation factor GTPase family. EF-Tu/EF-1A subfamily. In terms of assembly, monomer.

It is found in the cytoplasm. It catalyses the reaction GTP + H2O = GDP + phosphate + H(+). Its function is as follows. GTP hydrolase that promotes the GTP-dependent binding of aminoacyl-tRNA to the A-site of ribosomes during protein biosynthesis. The sequence is that of Elongation factor Tu from Paenarthrobacter aurescens (strain TC1).